A 410-amino-acid chain; its full sequence is Metacaspase-1B (410 aa).

The segment at 1–106 is disordered; sequence MYHRNSAPPP…SFGKGAPSNY (106 aa). 2 stretches are compositionally biased toward pro residues: residues 7–23 and 32–52; these read APPP…PQSQ and PPYP…PPPT. Catalysis depends on residues His201 and Cys257.

It belongs to the peptidase C14B family.

Its function is as follows. Involved in cell death (apoptosis). This is Metacaspase-1B (casB) from Aspergillus clavatus (strain ATCC 1007 / CBS 513.65 / DSM 816 / NCTC 3887 / NRRL 1 / QM 1276 / 107).